A 247-amino-acid polypeptide reads, in one-letter code: Killer cell lectin-like receptor subfamily I member 2 (247 aa).

Residues 1-12 show a composition bias toward basic and acidic residues; the sequence is MPRKKQNERGTN. The tract at residues 1–39 is disordered; it reads MPRKKQNERGTNKQEIINIETKSSTFQEKQRQSKTDQIS. At 1–79 the chain is on the cytoplasmic side; it reads MPRKKQNERG…GTDPWLTTWR (79 aa). The helical transmembrane segment at 80–100 threads the bilayer; the sequence is IITVILGTSCIILVTKVGFLI. Residues 101–247 lie on the Extracellular side of the membrane; the sequence is PNLFSRGEKR…KAYTCEFNLQ (147 aa). Residues N125, N196, N212, and N218 are each glycosylated (N-linked (GlcNAc...) asparagine). Residues 139 to 243 form the C-type lectin domain; that stretch reads FGNNFYLFFR…CSSKKAYTCE (105 aa). Disulfide bonds link C160–C242 and C221–C234.

As to quaternary structure, heterodimer with KLRE1. In terms of tissue distribution, expressed in natural killer (NK) cells.

The protein resides in the cell membrane. Its function is as follows. Lectin-like receptor for natural killer (NK) cells. Heterodimer formation with KLRE1 mediates NK cell cytolytic activity. The chain is Killer cell lectin-like receptor subfamily I member 2 from Rattus norvegicus (Rat).